A 172-amino-acid chain; its full sequence is Propanediol dehydratase small subunit (172 aa).

This sequence belongs to the diol/glycerol dehydratase small subunit family. The propanediol dehydratase enzyme is a heterotrimeric complex composed of a large (PduC), a medium (PduD) and a small (PduE) subunit. It depends on adenosylcob(III)alamin as a cofactor.

Its subcellular location is the bacterial microcompartment. It catalyses the reaction propane-1,2-diol = propanal + H2O. Its pathway is polyol metabolism; 1,2-propanediol degradation. Part of the PduCDE complex that catalyzes the dehydration of 1,2-propanediol (1,2-PD) to propionaldehyde. Localized in the bacterial microcompartment (BMC) dedicated to 1,2-PD degradation. Its function is as follows. Expression of a cosmid containing the full 21-gene pdu operon in E.coli allows E.coli to grow on 1,2-propanediol (1,2-PD) with the appearance of BMCs in its cytoplasm. In terms of biological role, the 1,2-PD-specific bacterial microcompartment (BMC) concentrates low levels of 1,2-PD catabolic enzymes, concentrates volatile reaction intermediates thus enhancing pathway flux and keeps the level of toxic, mutagenic propionaldehyde low. The sequence is that of Propanediol dehydratase small subunit from Citrobacter freundii.